A 206-amino-acid polypeptide reads, in one-letter code: AVFTVVNQCPFTVWAASVPVGGGRQLNRGESWRITAPAGTTAARIWARTGCQFDASGRGSCRTGDCGGVVQCTGYGRAPNTLAEYALKQFNNLDFFDISILDGFNVPYSFLPDGGSGCSRGPRCAVDVNARCPAELRQDGVCNNACPVFKKDEYCCVGSAANNCHPTNYSRYFKGQCPDAYSYPKDDATSTFTCPAGTNYKVVFCP.

Intrachain disulfides connect Cys9-Cys205, Cys51-Cys61, Cys66-Cys72, Cys118-Cys194, Cys124-Cys177, Cys132-Cys142, Cys146-Cys155, and Cys156-Cys164.

This sequence belongs to the thaumatin family.

Its function is as follows. Inhibits both trypsin and alpha-amylase. Inhibits the growth of some plant fungal pathogens. This chain is Alpha-amylase/trypsin inhibitor, found in Zea mays (Maize).